The following is a 300-amino-acid chain: UPF0761 membrane protein Patl_3954 (300 aa).

Helical transmembrane passes span 46 to 66 (LLSLVPFIMVFFTILSAFPAF), 103 to 123 (MGAIGILSLVVVALLLISNID), 138 to 158 (IIFTFAIYWMILTLGPLLIGL), 184 to 204 (MLKIVPFIASVCAFFILYMIV), 214 to 234 (ALVGAFMGALLFELSKKGFSF), and 248 to 268 (AMAVIPILFVWVYLSWIVVLL).

The protein belongs to the UPF0761 family.

Its subcellular location is the cell inner membrane. The polypeptide is UPF0761 membrane protein Patl_3954 (Pseudoalteromonas atlantica (strain T6c / ATCC BAA-1087)).